Here is a 144-residue protein sequence, read N- to C-terminus: Putative sugar phosphate isomerase RBE_0278 (144 aa).

Substrate is bound at residue His-12. His-101 serves as the catalytic Proton donor. Arg-135 is a binding site for substrate.

It belongs to the LacAB/RpiB family.

The protein is Putative sugar phosphate isomerase RBE_0278 of Rickettsia bellii (strain RML369-C).